Consider the following 418-residue polypeptide: Putative ion-transport protein YfeO (418 aa).

12 helical membrane passes run 10–30, 54–74, 99–119, 120–140, 149–169, 186–206, 223–243, 258–278, 300–320, 322–342, 343–363, and 371–391; these read LLLS…LIVV, DSPF…GLVI, ALLG…SLGP, EHPI…RLLP, ILAS…AALI, LFAP…FFHP, ILSG…AVWC, VLVL…GGPV, DYFL…ASGF, GGRI…LHEH, VPAV…VLVV, and LFMA…CIVM.

The protein belongs to the chloride channel (TC 2.A.49) family.

It is found in the cell membrane. The protein is Putative ion-transport protein YfeO of Escherichia coli O17:K52:H18 (strain UMN026 / ExPEC).